Reading from the N-terminus, the 901-residue chain is Protein translocase subunit SecA (901 aa).

ATP-binding positions include Gln-85, Gly-103–Thr-107, and Asp-510. The disordered stretch occupies residues Thr-847–Gln-901. Residues Arg-848–Ser-866 show a composition bias toward polar residues. 4 residues coordinate Zn(2+): Cys-882, Cys-884, Cys-893, and His-894. Positions Lys-888 to Gln-901 are enriched in basic residues.

The protein belongs to the SecA family. In terms of assembly, monomer and homodimer. Part of the essential Sec protein translocation apparatus which comprises SecA, SecYEG and auxiliary proteins SecDF-YajC and YidC. It depends on Zn(2+) as a cofactor.

It is found in the cell inner membrane. Its subcellular location is the cytoplasm. The catalysed reaction is ATP + H2O + cellular proteinSide 1 = ADP + phosphate + cellular proteinSide 2.. Its function is as follows. Part of the Sec protein translocase complex. Interacts with the SecYEG preprotein conducting channel. Has a central role in coupling the hydrolysis of ATP to the transfer of proteins into and across the cell membrane, serving both as a receptor for the preprotein-SecB complex and as an ATP-driven molecular motor driving the stepwise translocation of polypeptide chains across the membrane. The chain is Protein translocase subunit SecA from Haemophilus influenzae (strain PittGG).